Reading from the N-terminus, the 126-residue chain is Holo-[acyl-carrier-protein] synthase (126 aa).

Mg(2+)-binding residues include D9 and E58.

Belongs to the P-Pant transferase superfamily. AcpS family. Mg(2+) serves as cofactor.

The protein localises to the cytoplasm. The catalysed reaction is apo-[ACP] + CoA = holo-[ACP] + adenosine 3',5'-bisphosphate + H(+). Transfers the 4'-phosphopantetheine moiety from coenzyme A to a Ser of acyl-carrier-protein. This is Holo-[acyl-carrier-protein] synthase from Klebsiella pneumoniae (strain 342).